The primary structure comprises 801 residues: Protein 4.1 (801 aa).

Residues 1 to 187 (MTTEKGLLAE…GESKASHKVV (187 aa)) are disordered. Over residues 45-58 (EQSQESPSTTSPST) the composition is skewed to low complexity. The segment covering 88–107 (SDEKEVELLGEKGQDQKDVD) has biased composition (basic and acidic residues). A compositionally biased stretch (acidic residues) spans 108–117 (EGLGEQLEDD). The segment covering 141–151 (SLSSAETQPAQ) has biased composition (polar residues). The span at 154 to 166 (QKEDQDPEADCED) shows a compositional bias: acidic residues. Residues 167-182 (VEGKEPIKKPEGESKA) are compositionally biased toward basic and acidic residues. Residues 193–474 (MRCKVTLLDD…EHHTFFRLTS (282 aa)) enclose the FERM domain. Positions 477–587 (SIPKHRFLSL…GMPNQRESPK (111 aa)) are hydrophilic. Residues 516-613 (RTGSKRASRS…DKVKDLEKTQ (98 aa)) form a disordered region. A compositionally biased stretch (basic and acidic residues) spans 563 to 577 (RVEEMPKKTEEKPKE). The interval 588-651 (DVKATQQDSP…WDKRLSTHSP (64 aa)) is spectrin--actin-binding. Residues 591-601 (ATQQDSPSPTV) show a composition bias toward polar residues. Basic and acidic residues predominate over residues 604-613 (DKVKDLEKTQ). Positions 653–801 (RTLSFNGQVQ…GVVHQETEIA (149 aa)) are C-terminal (CTD).

In terms of assembly, binds with a high affinity to glycophorin and with lower affinity to band III protein. Associates with the nuclear mitotic apparatus. Binds calmodulin. In terms of processing, phosphorylated at multiple sites by different protein kinases and each phosphorylation event selectively modulates the protein's functions. In terms of tissue distribution, found exclusively in photoreceptors following the terminal mitosis of retinal neurons. When retinal synaptogenesis is complete, protein 4.1 is also expressed in the inner retina. In adult amphibian retinas, protein 4.1 is detected in photoreceptors, bipolar cells, and ganglion cell axons.

It is found in the nucleus. The protein resides in the cytoplasm. The protein localises to the cytoskeleton. It localises to the cell cortex. In terms of biological role, protein 4.1 is a major structural element of the erythrocyte membrane skeleton. It plays a key role in regulating membrane physical properties of mechanical stability and deformability by stabilizing spectrin-actin interaction. May be required for dynein-dynactin complex and NUMA1 recruitment at the mitotic cell cortex during anaphase. The sequence is that of Protein 4.1 from Xenopus laevis (African clawed frog).